A 1367-amino-acid chain; its full sequence is Phospholipid-transporting ATPase C4F10.16c (1367 aa).

Topologically, residues 1-154 are cytoplasmic; that stretch reads MPSLINFDAI…PKNLWNQFKN (154 aa). The interval 34-104 is disordered; sequence HNGSLAHEGP…KKNEAGTESG (71 aa). Positions 50–70 are enriched in basic and acidic residues; it reads SSRHHESQFSQEAHAEQRSRD. Positions 77–92 are enriched in polar residues; that stretch reads FEGSCNNSDQSWTSRV. A helical membrane pass occupies residues 155–172; that stretch reads IANAFFLFVTLLQCIPLF. The Lumenal segment spans residues 173–177; sequence CPEHL. The helical transmembrane segment at 178-197 threads the bilayer; sequence GLSFIPLSVILLTTAIKDGI. Residues 198–482 lie on the Cytoplasmic side of the membrane; the sequence is EDYRRCVLDK…PSKRSRITRD (285 aa). A helical transmembrane segment spans residues 483–503; it reads LNWTIILNFLLLFAMCLFSGV. The Lumenal segment spans residues 504–531; sequence LRSIYSAQNNSARVFELSKNSNTAPAHG. The helical transmembrane segment at 532 to 552 threads the bilayer; it reads IISIFTSLILFQNLVPISLYI. Residues 553 to 1091 lie on the Cytoplasmic side of the membrane; the sequence is TMDIVRSIQS…GRWDYKRMSQ (539 aa). D600 functions as the 4-aspartylphosphate intermediate in the catalytic mechanism. ATP contacts are provided by D600, K601, T602, E724, F765, S767, K770, K788, R822, T823, T902, G903, D904, R1009, and K1015. Residue D600 coordinates Mg(2+). T602 is a binding site for Mg(2+). A Mg(2+)-binding site is contributed by D1035. N1038 and D1039 together coordinate ATP. Residue D1039 coordinates Mg(2+). The helical transmembrane segment at 1092–1112 threads the bilayer; sequence MISFFFYKNVIWTFILFWYQF. The Lumenal segment spans residues 1113–1124; the sequence is YNEFDGNYIFDY. The helical transmembrane segment at 1125–1145 threads the bilayer; that stretch reads TYVMLFNLLFTSLPVIIAGCF. The Cytoplasmic portion of the chain corresponds to 1146-1174; the sequence is DQDVDASVSMKNPSLYQRGILGLEWNGKR. The helical transmembrane segment at 1175-1197 threads the bilayer; the sequence is FWSYMLDGIYQSLVCFGVALFVF. The Lumenal portion of the chain corresponds to 1198-1212; sequence KFGDFVSWTGRNIEC. A helical transmembrane segment spans residues 1213 to 1233; that stretch reads IEDIGLFISSPTIFVINIFIL. The Cytoplasmic portion of the chain corresponds to 1234–1240; it reads MNQERLN. The helical transmembrane segment at 1241–1261 threads the bilayer; the sequence is LISLITWMFSIGVFWIWTFIY. Over 1262–1276 the chain is Lumenal; it reads SEVGPSYAFHKSASR. A helical membrane pass occupies residues 1277 to 1297; the sequence is TCQTFGFWCVTVLTIALCLLP. R1298 serves as a coordination point for a 1,2-diacyl-sn-glycero-3-phospho-L-serine. Over 1298-1367 the chain is Cytoplasmic; that stretch reads RFSYICLQKL…TSVSFDDSNK (70 aa).

It belongs to the cation transport ATPase (P-type) (TC 3.A.3) family. Type IV subfamily. Mg(2+) serves as cofactor.

The protein resides in the cell membrane. It is found in the endoplasmic reticulum membrane. The catalysed reaction is ATP + H2O + phospholipidSide 1 = ADP + phosphate + phospholipidSide 2.. The enzyme catalyses a 1,2-diacyl-sn-glycero-3-phosphoethanolamine(out) + ATP + H2O = a 1,2-diacyl-sn-glycero-3-phosphoethanolamine(in) + ADP + phosphate + H(+). It catalyses the reaction a 1,2-diacyl-sn-glycero-3-phosphocholine(out) + ATP + H2O = a 1,2-diacyl-sn-glycero-3-phosphocholine(in) + ADP + phosphate + H(+). It carries out the reaction a beta-D-glucosyl-(1&lt;-&gt;1')-N-acylsphing-4-enine(out) + ATP + H2O = a beta-D-glucosyl-(1&lt;-&gt;1')-N-acylsphing-4-enine(in) + ADP + phosphate + H(+). The catalysed reaction is a 1,2-diacyl-sn-glycero-3-phospho-L-serine(out) + ATP + H2O = a 1,2-diacyl-sn-glycero-3-phospho-L-serine(in) + ADP + phosphate + H(+). In terms of biological role, catalytic component of a P4-ATPase flippase complex which catalyzes the hydrolysis of ATP coupled to the transport of glucosylceramide, phosphatidylcholine, phosphatidylethanolamine, and small amounts of phosphatidylserine from the lumenal to the cytosolic leaflet of the cell membrane and ensures the maintenance of asymmetric distribution of phospholipids. The sequence is that of Phospholipid-transporting ATPase C4F10.16c from Schizosaccharomyces pombe (strain 972 / ATCC 24843) (Fission yeast).